Consider the following 103-residue polypeptide: Putative membrane protein insertion efficiency factor (103 aa).

Belongs to the UPF0161 family.

The protein resides in the cell membrane. Could be involved in insertion of integral membrane proteins into the membrane. This is Putative membrane protein insertion efficiency factor from Clavibacter sepedonicus (Clavibacter michiganensis subsp. sepedonicus).